Consider the following 383-residue polypeptide: Chorismate synthase (383 aa).

R48 is an NADP(+) binding site. Residues 125–127 (RSS), G286, 301–305 (HAPTS), and R328 contribute to the FMN site. A disordered region spans residues 361 to 383 (PDRLDDNPGQYETEYHPSSPQTN).

This sequence belongs to the chorismate synthase family. FMNH2 is required as a cofactor.

It catalyses the reaction 5-O-(1-carboxyvinyl)-3-phosphoshikimate = chorismate + phosphate. It functions in the pathway metabolic intermediate biosynthesis; chorismate biosynthesis; chorismate from D-erythrose 4-phosphate and phosphoenolpyruvate: step 7/7. Its function is as follows. Catalyzes the anti-1,4-elimination of the C-3 phosphate and the C-6 proR hydrogen from 5-enolpyruvylshikimate-3-phosphate (EPSP) to yield chorismate, which is the branch point compound that serves as the starting substrate for the three terminal pathways of aromatic amino acid biosynthesis. This reaction introduces a second double bond into the aromatic ring system. This is Chorismate synthase from Haloquadratum walsbyi (strain DSM 16790 / HBSQ001).